Consider the following 163-residue polypeptide: NADH-quinone oxidoreductase subunit I (163 aa).

4Fe-4S ferredoxin-type domains follow at residues 54 to 84 (LRRY…IDSH) and 94 to 123 (TRYD…LTRL). [4Fe-4S] cluster is bound by residues Cys-64, Cys-67, Cys-70, Cys-74, Cys-103, Cys-106, Cys-109, and Cys-113.

This sequence belongs to the complex I 23 kDa subunit family. In terms of assembly, NDH-1 is composed of 14 different subunits. Subunits NuoA, H, J, K, L, M, N constitute the membrane sector of the complex. Requires [4Fe-4S] cluster as cofactor.

The protein localises to the cell inner membrane. It catalyses the reaction a quinone + NADH + 5 H(+)(in) = a quinol + NAD(+) + 4 H(+)(out). In terms of biological role, NDH-1 shuttles electrons from NADH, via FMN and iron-sulfur (Fe-S) centers, to quinones in the respiratory chain. The immediate electron acceptor for the enzyme in this species is believed to be ubiquinone. Couples the redox reaction to proton translocation (for every two electrons transferred, four hydrogen ions are translocated across the cytoplasmic membrane), and thus conserves the redox energy in a proton gradient. This chain is NADH-quinone oxidoreductase subunit I, found in Halorhodospira halophila (strain DSM 244 / SL1) (Ectothiorhodospira halophila (strain DSM 244 / SL1)).